We begin with the raw amino-acid sequence, 330 residues long: DNA-directed RNA polymerase subunit alpha (330 aa).

The tract at residues 1–231 (MQTNLLKPKT…EQLAVFAQLE (231 aa)) is alpha N-terminal domain (alpha-NTD). The segment at 250 to 330 (FDPILLRPVD…NWPPAGLDKR (81 aa)) is alpha C-terminal domain (alpha-CTD).

The protein belongs to the RNA polymerase alpha chain family. As to quaternary structure, homodimer. The RNAP catalytic core consists of 2 alpha, 1 beta, 1 beta' and 1 omega subunit. When a sigma factor is associated with the core the holoenzyme is formed, which can initiate transcription.

The enzyme catalyses RNA(n) + a ribonucleoside 5'-triphosphate = RNA(n+1) + diphosphate. Its function is as follows. DNA-dependent RNA polymerase catalyzes the transcription of DNA into RNA using the four ribonucleoside triphosphates as substrates. In Paracidovorax citrulli (strain AAC00-1) (Acidovorax citrulli), this protein is DNA-directed RNA polymerase subunit alpha.